A 135-amino-acid polypeptide reads, in one-letter code: Large ribosomal subunit protein eL32 (135 aa).

It belongs to the eukaryotic ribosomal protein eL32 family.

The sequence is that of Large ribosomal subunit protein eL32 (rpl32e) from Methanococcus vannielii.